Reading from the N-terminus, the 140-residue chain is Gonadotropin subunit beta-2 (140 aa).

A signal peptide spans 1–24 (MSVYPECTWLLFVCLCHLLVSAGG). 6 cysteine pairs are disulfide-bonded: cysteine 30/cysteine 78, cysteine 44/cysteine 93, cysteine 47/cysteine 131, cysteine 55/cysteine 109, cysteine 59/cysteine 111, and cysteine 114/cysteine 121. An N-linked (GlcNAc...) asparagine glycan is attached at asparagine 34.

The protein belongs to the glycoprotein hormones subunit beta family. In terms of assembly, heterodimer of an alpha and a beta chain.

It localises to the secreted. Involved in gametogenesis and steroidogenesis. The protein is Gonadotropin subunit beta-2 (cgbb) of Anguilla anguilla (European freshwater eel).